Reading from the N-terminus, the 391-residue chain is Phosphoglycerate kinase (391 aa).

Residues 21 to 23 (DLN), arginine 36, 59 to 62 (HLGR), arginine 113, and arginine 146 contribute to the substrate site. Residues lysine 197, glutamate 319, and 345–348 (GGDT) each bind ATP.

It belongs to the phosphoglycerate kinase family. As to quaternary structure, monomer.

The protein localises to the cytoplasm. The enzyme catalyses (2R)-3-phosphoglycerate + ATP = (2R)-3-phospho-glyceroyl phosphate + ADP. It functions in the pathway carbohydrate degradation; glycolysis; pyruvate from D-glyceraldehyde 3-phosphate: step 2/5. In Shewanella baltica (strain OS185), this protein is Phosphoglycerate kinase.